Reading from the N-terminus, the 154-residue chain is Protein X (154 aa).

The mitochondrial targeting sequence stretch occupies residues 68-117 (PCALRFTSARRMETTVNAHQFLPKVLHKRTLGLSAMSTTDLEAYFKDCLF).

Belongs to the orthohepadnavirus protein X family. May form homodimer. May interact with host CEBPA, CFLAR, CREB1, DDB1, E4F1, HBXIP, HSPD1/HSP60, NFKBIA, POLR2E and SMAD4. Interacts with host SMC5-SMC6 complex and induces its degradation. Interacts with host TRPC4AP; leading to prevent ubiquitination of TRPC4AP. Interacts with host PLSCR1; this interaction promotes ubiquitination and degradation of HBx and impairs HBx-mediated cell proliferation. In terms of processing, a fraction may be phosphorylated in insect cells and HepG2 cells, a human hepatoblastoma cell line. Phosphorylated in vitro by host protein kinase C or mitogen-activated protein kinase. N-acetylated in insect cells.

The protein resides in the host cytoplasm. It is found in the host nucleus. Its subcellular location is the host mitochondrion. In terms of biological role, multifunctional protein that plays a role in silencing host antiviral defenses and promoting viral transcription. Does not seem to be essential for HBV infection. May be directly involved in development of cirrhosis and liver cancer (hepatocellular carcinoma). Most of cytosolic activities involve modulation of cytosolic calcium. The effect on apoptosis is controversial depending on the cell types in which the studies have been conducted. May induce apoptosis by localizing in mitochondria and causing loss of mitochondrial membrane potential. May also modulate apoptosis by binding host CFLAR, a key regulator of the death-inducing signaling complex (DISC). Promotes viral transcription by using the host E3 ubiquitin ligase DDB1 to target the SMC5-SMC6 complex to proteasomal degradation. This host complex would otherwise bind to viral episomal DNA, and prevents its transcription. Moderately stimulates transcription of many different viral and cellular transcription elements. Promoters and enhancers stimulated by HBx contain DNA binding sites for NF-kappa-B, AP-1, AP-2, c-EBP, ATF/CREB, or the calcium-activated factor NF-AT. The sequence is that of Protein X from Homo sapiens (Human).